Here is a 391-residue protein sequence, read N- to C-terminus: Formate-dependent phosphoribosylglycinamide formyltransferase (391 aa).

N(1)-(5-phospho-beta-D-ribosyl)glycinamide contacts are provided by residues 18 to 19 and Glu78; that span reads EL. ATP is bound by residues Arg110, Lys151, 156 to 161, 191 to 194, and Glu199; these read SSGKGQ and EEFI. The 191-residue stretch at 115–305 folds into the ATP-grasp domain; it reads ELVSRDLKIK…EFELHLRAFL (191 aa). Mg(2+)-binding residues include Glu264 and Glu276. N(1)-(5-phospho-beta-D-ribosyl)glycinamide is bound by residues Asp283, Lys353, and 360-361; that span reads RR.

The protein belongs to the PurK/PurT family. Homodimer.

It catalyses the reaction N(1)-(5-phospho-beta-D-ribosyl)glycinamide + formate + ATP = N(2)-formyl-N(1)-(5-phospho-beta-D-ribosyl)glycinamide + ADP + phosphate + H(+). Its pathway is purine metabolism; IMP biosynthesis via de novo pathway; N(2)-formyl-N(1)-(5-phospho-D-ribosyl)glycinamide from N(1)-(5-phospho-D-ribosyl)glycinamide (formate route): step 1/1. Involved in the de novo purine biosynthesis. Catalyzes the transfer of formate to 5-phospho-ribosyl-glycinamide (GAR), producing 5-phospho-ribosyl-N-formylglycinamide (FGAR). Formate is provided by PurU via hydrolysis of 10-formyl-tetrahydrofolate. This chain is Formate-dependent phosphoribosylglycinamide formyltransferase, found in Prochlorococcus marinus (strain MIT 9312).